The sequence spans 645 residues: Dictomallein-like protein (645 aa).

An N-terminal signal peptide occupies residues 1 to 13 (MKLSMVMVLLVLA). Residues 19–55 (CGGNDDNNSERTHESGDSNGDVTTPDNDASSNDEDDA) are disordered. In terms of domain architecture, Peptidase M66 spans 177-448 (PALHPELDLT…QRWVRNRARM (272 aa)). Histidine 333 lines the Zn(2+) pocket. The active site involves glutamate 334. Residues histidine 337 and histidine 343 each contribute to the Zn(2+) site.

Belongs to the dictomallein family. Requires Zn(2+) as cofactor.

The protein localises to the secreted. The chain is Dictomallein-like protein (dtmL) from Hahella chejuensis (strain KCTC 2396).